A 229-amino-acid chain; its full sequence is ADP-ribosylation factor-like protein 6-interacting protein 4 (229 aa).

A compositionally biased stretch (basic residues) spans 1-20; the sequence is MAHVGSRKRSRSRSRSRSGR. The tract at residues 1–152 is disordered; the sequence is MAHVGSRKRS…EDNDGPVLTD (152 aa). Residues 21 to 35 show a composition bias toward basic and acidic residues; the sequence is RGSEKRSKRSSKDAS. Low complexity predominate over residues 66–87; it reads SRSSSTSSSSSSSSSASSSSSS. Residues 90 to 117 are compositionally biased toward basic residues; it reads RKKRAKHKEKKRKKKKKKRKKKLKKRVK. Ser140 and Ser174 each carry phosphoserine. A Glycyl lysine isopeptide (Lys-Gly) (interchain with G-Cter in SUMO2) cross-link involves residue Lys191.

Belongs to the ARL6IP4 family. As to quaternary structure, interacts with ZCCHC17. Interacts with SRSF2. Interacts with ARL6. As to expression, widely expressed. Expressed at high level in testis and thymus.

It localises to the nucleus. It is found in the nucleolus. Its subcellular location is the nucleus speckle. Its function is as follows. Involved in modulating alternative pre-mRNA splicing with either 5' distal site activation or preferential use of 3' proximal site. In Mus musculus (Mouse), this protein is ADP-ribosylation factor-like protein 6-interacting protein 4 (Arl6ip4).